The sequence spans 1193 residues: MSSPTSTSPKSSFVFSPTSFPHAAIASNNVRPRTNLPPPPPPDRIPPPKGRSHQQKFKILRKEKDKDRRQPIDLEDDWTIEDVTVNGDGVEQESQYLDDLQPEENELKPGPRFLEMANREEKKEKTSKSRGLVKKTSRLFGRDKDKDRGKPEEPAVTGSSSSTLAAMRQSSSTSTDSTTSRSITSAFTRQNSIQSRRSPRTSFGQAHSRRASQDSQMSWPAPRSIRSSTTSHDPSSDPQNSASSTGVPIPQRQGASMSSLSRYSLPHPNGGTSRSPDTFPNKMSTWFSHLLPVSSGSPPSSSYETSSSIRKQSSVAASLFNAARQKAVDGVRHLLDSEAQPDKCMDTIWVRGVAHPGWRPITPENSTSNLPALEPGGSGGGVEDRRASLSMNGPSPNSLRPSSWKRNTSLPPTGQPQSPAHVHTQASNQTTSPSKGFTGIWNPSTLSLGMPIGGSPNKEKENGSGAESPSKKKSKEIVKWPEQFYDDFKSTVWFTYRNQYAPISSLSPNLLIPSPEAYYASFGPPLDATSPSSLRVTTPTAAAQQSASGSGGWGWSKEERGLTSDAGWGCMLRTGQSLLVNALIHIHLGRDWRVPSTPASFSEATTTQEIAALKDYAKYAQMLSWFLDDPSPLCPFSVHRMALIGKELGKEVGEWFGPSTAAGALKTLANSFAPCGVAVATATDSIIYKSDVYTASNLPSDDWNSISPTFNSSKKKRRGDNEAKEEKWGKRAVLILVGVRLGLDGVNPIYYDSIKALFTFPQSVGIAGGRPSSSYYFVGSQANHLFYLDPHLTRPAIPLQIPPLPVHSAKEKGSTESSSIMSTAEEESEEGVMIRTPETPRSTTPSMFSAPEHVEDEDQEEWGQGSKYKLDVVDADGVEVEGIDDDKGRNEGKMIREEVPKSSFESNGAAQEQPKKQKGFTSTASIDSQVDSQVDPHMLWYTTAYPDPLLRTYHCEKIKKMPLSGLDPSMLLGFVCKDEDDFEDFVERVAQLPKKIFTVQDEMPSWEEDDDAGLESVSEPDFEGDEFEEPGTAKPRFDSSSPVNEDSLKGPRVVSASTTATPLAAKEEDHLDVEEANSTDDDNESIGTTTAAGPMDIARHLNRVDLSSKREQEGDDDDGEWVGGTPSSQGVLVEPPSLKGTPSKSRSSAFEPRYEQNGETEQERPVFPARNRMESWVEPVCEGKEAPNGDNLL.

Disordered stretches follow at residues 23–284 and 358–474; these read AAIA…NKMS and WRPI…KKKS. Pro residues predominate over residues 35–49; it reads NLPPPPPPDRIPPPK. Over residues 50 to 59 the composition is skewed to basic residues; that stretch reads GRSHQQKFKI. 3 stretches are compositionally biased toward basic and acidic residues: residues 60–72, 117–127, and 140–153; these read LRKE…RQPI, ANREEKKEKTS, and FGRD…KPEE. A compositionally biased stretch (low complexity) spans 170–185; it reads SSSTSTDSTTSRSITS. The span at 186–205 shows a compositional bias: polar residues; it reads AFTRQNSIQSRRSPRTSFGQ. The segment covering 227-238 has biased composition (low complexity); sequence SSTTSHDPSSDP. 3 stretches are compositionally biased toward polar residues: residues 253 to 262, 270 to 284, and 389 to 447; these read QGASMSSLSR, GGTS…NKMS, and LSMN…STLS. The active-site Nucleophile is the cysteine 570. Active-site residues include aspartate 789 and histidine 791. Disordered stretches follow at residues 807 to 869, 899 to 924, and 1000 to 1171; these read HSAK…SKYK, VPKS…TSTA, and QDEM…PARN. Residues 835-846 show a composition bias toward low complexity; it reads RTPETPRSTTPS. Composition is skewed to acidic residues over residues 1004–1029 and 1070–1084; these read PSWE…EFEE and HLDV…DDNE. Composition is skewed to basic and acidic residues over residues 1097-1112 and 1152-1164; these read IARH…KREQ and PRYE…EQER.

The protein belongs to the peptidase C54 family.

Its subcellular location is the cytoplasm. It localises to the nucleus. It is found in the preautophagosomal structure. It catalyses the reaction [protein]-C-terminal L-amino acid-glycyl-phosphatidylethanolamide + H2O = [protein]-C-terminal L-amino acid-glycine + a 1,2-diacyl-sn-glycero-3-phosphoethanolamine. In terms of biological role, cysteine protease that plays a key role in cytoplasm to vacuole transport (Cvt) and autophagy by mediating both proteolytic activation and delipidation of ATG8. Required for selective autophagic degradation of the nucleus (nucleophagy) as well as for mitophagy which contributes to regulate mitochondrial quantity and quality by eliminating the mitochondria to a basal level to fulfill cellular energy requirements and preventing excess ROS production. The protease activity is required for proteolytic activation of ATG8: cleaves the C-terminal amino acid of ATG8 to reveal a C-terminal glycine. ATG8 ubiquitin-like activity requires the exposure of the glycine at the C-terminus for its conjugation to phosphatidylethanolamine (PE) and its insertion to membranes, which is necessary for autophagy. The ATG8-PE conjugate mediates tethering between adjacent membranes and stimulates membrane hemifusion, leading to expansion of the autophagosomal membrane during autophagy. In addition to the protease activity, also catalyzes deconjugation of PE-conjugated forms of ATG8 during macroautophagy: ATG8 delipidation is required to release the protein from membranes, which facilitates multiple events during macroautophagy, and especially for efficient autophagosome biogenesis, the assembly of ATG9-containing tubulovesicular clusters into phagophores/autophagosomes, and for the disassembly of PAS-associated ATG components. ATG8 delipidation by ATG4 also recycles ATG8-PE generated on inappropriate membranes to maintain a reservoir of unlipidated ATG8 that is required for autophagosome formation at the PAS. The chain is Cysteine protease ATG4 (ATG4) from Cryptococcus neoformans var. neoformans serotype D (strain JEC21 / ATCC MYA-565) (Filobasidiella neoformans).